Reading from the N-terminus, the 352-residue chain is Iron-sulfur cluster carrier protein (352 aa).

114–121 (GKGGVGKS) is an ATP binding site.

It belongs to the Mrp/NBP35 ATP-binding proteins family. In terms of assembly, homodimer. Interacts with BrxC.

In terms of biological role, binds and transfers iron-sulfur (Fe-S) clusters to target apoproteins. Can hydrolyze ATP. Negatively regulates the expression of hpr/scoC. The effect on hpr/scoC may be indirect. The protein is Iron-sulfur cluster carrier protein (salA) of Bacillus subtilis (strain 168).